Reading from the N-terminus, the 312-residue chain is RNA binding protein fox-1 homolog 3 (312 aa).

A compositionally biased stretch (pro residues) spans 1–29 (MAQPYPPAQYPPPPQNGIPAEYAPPPPHP). The tract at residues 1 to 104 (MAQPYPPAQY…KQQPKRLHVS (104 aa)) is disordered. Over residues 49–87 (TPAQTHPEQPGSEASTQPIAGTQTVPQTDEAAQTDSQPL) the composition is skewed to polar residues. Residues 100–175 (RLHVSNIPFR…RKIEVNNATA (76 aa)) form the RRM domain. Asymmetric dimethylarginine; alternate is present on R223. The residue at position 223 (R223) is an Omega-N-methylarginine; alternate. Position 272 is an asymmetric dimethylarginine (R272).

The protein resides in the nucleus. It localises to the cytoplasm. Pre-mRNA alternative splicing regulator. Regulates alternative splicing of RBFOX2 to enhance the production of mRNA species that are targeted for nonsense-mediated decay (NMD). This chain is RNA binding protein fox-1 homolog 3 (RBFOX3), found in Homo sapiens (Human).